The following is a 579-amino-acid chain: MSSLMAIRCARTQNIVTIGSLLQLRSSFPRLSSQFHFSGTLNSIPIKHLSTSAAANDYHQNPQSGSPSQHQRPYPPQSFDSQNQTNTNQRVPQSPNQWSTQHGGQIPQYGGQNPQHGGQRPPYGGQNPQQGGQMSQYGGHNPQHGGHRPQYGGQRPQYGGPGNNYQNQNVQQSNQSQYYTPQQQQQPQPPRSSNQSPNQMNEVAPPPSVEEVMRLCQRRLYKDAIELLDKGAMPDRECFVLLFESCANLKSLEHSKKVHDHFLQSKFRGDPKLNNMVISMFGECSSITDAKRVFDHMVDKDMDSWHLMMCAYSDNGMGDDALHLFEEMTKHGLKPNEETFLTVFLACATVGGIEEAFLHFDSMKNEHGISPKTEHYLGVLGVLGKCGHLVEAEQYIRDLPFEPTADFWEAMRNYARLHGDIDLEDYMEELMVDVDPSKAVINKIPTPPPKSFKETNMVTSKSRILEFRNLTFYKDEAKEMAAKKGVVYVPDTRFVLHDIDQEAKEQALLYHSERLAIAYGIICTPPRKTLTIIKNLRVCGDCHNFIKIMSKIIGRVLIVRDNKRFHHFKDGKCSCGDYW.

The N-terminal 49 residues, 1–49 (MSSLMAIRCARTQNIVTIGSLLQLRSSFPRLSSQFHFSGTLNSIPIKHL), are a transit peptide targeting the mitochondrion. Polar residues-rich tracts occupy residues 56–71 (NDYH…SQHQ) and 78–103 (SFDS…TQHG). Residues 56 to 208 (NDYHQNPQSG…QMNEVAPPPS (153 aa)) form a disordered region. 2 stretches are compositionally biased toward low complexity: residues 117-136 (GGQR…QMSQ) and 148-199 (RPQY…SPNQ). PPR repeat units follow at residues 235 to 269 (DREC…KFRG), 270 to 300 (DPKL…MVDK), 301 to 335 (DMDS…GLKP), 336 to 371 (NEET…GISP), and 372 to 402 (KTEH…LPFE). The segment at 485–579 (GVVYVPDTRF…DGKCSCGDYW (95 aa)) is type DYW motif.

This sequence belongs to the PPR family. PCMP-H subfamily.

The protein resides in the mitochondrion. In Arabidopsis thaliana (Mouse-ear cress), this protein is Pentatricopeptide repeat-containing protein At2g15690, mitochondrial (PCMP-H66).